The chain runs to 313 residues: Undecaprenyl-diphosphatase (313 aa).

6 helical membrane passes run 121-141 (YRIG…GFLF), 152-172 (LWLV…AEHY), 187-207 (GLVM…RSGA), 225-245 (FSFL…LPDA), 259-279 (QLLV…AWLL), and 290-310 (FVGY…AGVI).

It belongs to the UppP family.

The protein localises to the cell membrane. The catalysed reaction is di-trans,octa-cis-undecaprenyl diphosphate + H2O = di-trans,octa-cis-undecaprenyl phosphate + phosphate + H(+). Functionally, catalyzes the dephosphorylation of undecaprenyl diphosphate (UPP). Confers resistance to bacitracin. In Nocardia farcinica (strain IFM 10152), this protein is Undecaprenyl-diphosphatase.